The chain runs to 1114 residues: Proto-oncogene tyrosine-protein kinase receptor Ret (1114 aa).

The signal sequence occupies residues 1 to 28 (MAKATSGAAGLRLLLLLLLPLLGKVALG). A cadherin-like region 1 (CLD1) region spans residues 29–153 (LYFSRDAYWE…RVYFSFFNTS (125 aa)). Residues 29-635 (LYFSRDAYWE…QDPLCDELCR (607 aa)) are Extracellular-facing. A glycan (N-linked (GlcNAc...) asparagine) is linked at Asn98. Residues Cys137 and Cys142 are joined by a disulfide bond. Residue Asn151 is glycosylated (N-linked (GlcNAc...) asparagine). Cystine bridges form between Cys157–Cys197 and Cys166–Cys243. Residues 168–272 (PETRPSFRIR…YDEDDSAPTF (105 aa)) enclose the Cadherin domain. Glu178 and Asn179 together coordinate Ca(2+). An N-linked (GlcNAc...) asparagine glycan is attached at Asn199. The Ca(2+) site is built by Asp230, Glu232, Asp264, Glu265, Asp266, Asp267, Ser268, Asp300, and Asp302. The tract at residues 265-379 (EDDSAPTFPA…MQLAVLVNDS (115 aa)) is cadherin-like region 3 (CLD3). 5 N-linked (GlcNAc...) asparagine glycosylation sites follow: Asn336, Asn343, Asn361, Asn367, and Asn377. Asp378 serves as a coordination point for Ca(2+). Asn394 is a glycosylation site (N-linked (GlcNAc...) asparagine). The segment at 405-506 (PSTYSLSVSR…QAQLLVTVEG (102 aa)) is cadherin-like region 4 (CLD4). A disulfide bond links Cys426 and Cys430. Residues Asn448 and Asn468 are each glycosylated (N-linked (GlcNAc...) asparagine). 4 disulfide bridges follow: Cys449-Cys478, Cys515-Cys531, Cys519-Cys541, and Cys528-Cys558. Asn554 carries N-linked (GlcNAc...) asparagine glycosylation. Residues Thr564, Cys565, Asp567, His569, Glu574, and Asp584 each coordinate Ca(2+). 5 cysteine pairs are disulfide-bonded: Cys565–Cys581, Cys570–Cys585, Cys609–Cys620, Cys611–Cys618, and Cys630–Cys634. A helical membrane pass occupies residues 636 to 657 (TVIAAAVLFSFIVSVLLSAFCI). Residues 658–1114 (HCYHKFAHKP…AAKLMDTFDS (457 aa)) are Cytoplasmic-facing. At Tyr687 the chain carries Phosphotyrosine; by autocatalysis. Ser688 carries O-linked (GlcNAc) serine glycosylation. Ser696 carries the post-translational modification Phosphoserine. Residues 724–1016 (LVLGKTLGEG…KMMVKRRDYL (293 aa)) enclose the Protein kinase domain. ATP is bound by residues 730 to 738 (LGEGEFGKV) and Lys758. 805-807 (EYA) provides a ligand contact to semaxanib. A phosphotyrosine; by autocatalysis mark is found at Tyr806, Tyr809, and Tyr826. The active-site Proton acceptor is the Asp874. A phosphotyrosine; by autocatalysis mark is found at Tyr900, Tyr905, Tyr981, Tyr1015, Tyr1029, Tyr1062, Tyr1090, and Tyr1096.

It belongs to the protein kinase superfamily. Tyr protein kinase family. As to quaternary structure, phosphorylated form interacts with the PBT domain of DOK2, DOK4 and DOK5. The phosphorylated form interacts with PLCG1 and GRB7. Interacts (not phosphorylated) with PTK2/FAK1 (via FERM domain). Extracellular cell-membrane anchored RET cadherin fragments form complex in neurons with reduced trophic status, preferentially at the contact sites between somas. Interacts with AIP in the pituitary gland; this interaction prevents the formation of the AIP-survivin complex. Interacts (inactive) with CBLC and CD2AP; dissociates upon activation by GDNF which increases CBLC:CD2AP interaction. Ca(2+) is required as a cofactor. In terms of processing, autophosphorylated on C-terminal tyrosine residues upon ligand stimulation. Post-translationally, proteolytically cleaved by caspase-3. The soluble RET kinase fragment is able to induce cell death. The extracellular cell-membrane anchored RET cadherin fragment accelerates cell adhesion in sympathetic neurons.

The protein resides in the cell membrane. The protein localises to the endosome membrane. It catalyses the reaction L-tyrosyl-[protein] + ATP = O-phospho-L-tyrosyl-[protein] + ADP + H(+). With respect to regulation, repressed by 4-(3-hydroxyanilino)-quinolines derivatives, indolin-2-one-derivatives, 2-(alkylsulfanyl)-4-(3-thienyl) nicotinonitrile analogs, 3- and 4-substituted beta-carbolin-1-ones, vandetanib, motesanib, sorafenib (BAY 43-9006), cabozantinib (XL184), lenvatinib, sunitinib, nintedanib, and withaferin A (WA). Inactivation by sorafenib both reduces kinase activity and promotes lysosomal degradation. In terms of biological role, receptor tyrosine-protein kinase involved in numerous cellular mechanisms including cell proliferation, neuronal navigation, cell migration, and cell differentiation in response to glia cell line-derived growth family factors (GDNF, NRTN, ARTN, PSPN and GDF15). In contrast to most receptor tyrosine kinases, RET requires not only its cognate ligands but also coreceptors, for activation. GDNF ligands (GDNF, NRTN, ARTN, PSPN and GDF15) first bind their corresponding GDNFR coreceptors (GFRA1, GFRA2, GFRA3, GFRA4 and GFRAL, respectively), triggering RET autophosphorylation and activation, leading to activation of downstream signaling pathways, including the MAPK- and AKT-signaling pathways. Acts as a dependence receptor via the GDNF-GFRA1 signaling: in the presence of the ligand GDNF in somatotrophs within pituitary, promotes survival and down regulates growth hormone (GH) production, but triggers apoptosis in absence of GDNF. Required for the molecular mechanisms orchestration during intestine organogenesis via the ARTN-GFRA3 signaling: involved in the development of enteric nervous system and renal organogenesis during embryonic life, and promotes the formation of Peyer's patch-like structures, a major component of the gut-associated lymphoid tissue. Mediates, through interaction with GDF15-receptor GFRAL, GDF15-induced cell-signaling in the brainstem which triggers an aversive response, characterized by nausea, vomiting, and/or loss of appetite in response to various stresses. Modulates cell adhesion via its cleavage by caspase in sympathetic neurons and mediates cell migration in an integrin (e.g. ITGB1 and ITGB3)-dependent manner. Also active in the absence of ligand, triggering apoptosis through a mechanism that requires receptor intracellular caspase cleavage. Triggers the differentiation of rapidly adapting (RA) mechanoreceptors. Involved in the development of the neural crest. Regulates nociceptor survival and size. Phosphorylates PTK2/FAK1. Its function is as follows. Isoform 1 in complex with GFRAL induces higher activation of MAPK-signaling pathway than isoform 2 in complex with GFRAL. This is Proto-oncogene tyrosine-protein kinase receptor Ret from Homo sapiens (Human).